A 527-amino-acid chain; its full sequence is Berberine bridge enzyme-like 8 (527 aa).

An N-terminal signal peptide occupies residues 1–20 (MKYALILVLFFVVFIWQSSS). C31 and C93 form a disulfide bridge. 2 N-linked (GlcNAc...) asparagine glycosylation sites follow: N51 and N68. One can recognise an FAD-binding PCMH-type domain in the interval 71–247 (STPKPFLIIA…LAYKINLVEV (177 aa)). A cross-link (6-(S-cysteinyl)-8alpha-(pros-histidyl)-FAD (His-Cys)) is located at residues 108–172 (HDYDGLSYVT…KTLAYPAGIC (65 aa)). Residues N250, N263, and N292 are each glycosylated (N-linked (GlcNAc...) asparagine).

The protein belongs to the oxygen-dependent FAD-linked oxidoreductase family. FAD is required as a cofactor. Post-translationally, the FAD cofactor is bound via a bicovalent 6-S-cysteinyl, 8alpha-N1-histidyl FAD linkage.

The protein localises to the secreted. The protein resides in the cell wall. In Arabidopsis thaliana (Mouse-ear cress), this protein is Berberine bridge enzyme-like 8.